Reading from the N-terminus, the 290-residue chain is MAMEGYRGFLGLLVSALLVGFLSVIFVLIWVLHFREGLGWNGSGLEFNWHPVLAVTGFVFIQGIAIIVYRLPWTWKCSKLLMKSIHAGLNAVAAILAIISVVAVFEYHNVQKVPHMYSLHSWVGLTALILYIQQLVVGFFVFLLPWAPPSLRAIVMPIHVYSGLLLFGTVIATVLMGVTEKLFFVLKHPSYHSFPPEGVFTNTLGLLILVFGALIFWIVTRPQWKRPREPGSVPLQLNGGNAECRMEGAIAISSAHSMDAADPADAESSSEGAARKRTLGLADSGQRSTM.

Over 1–7 (MAMEGYR) the chain is Cytoplasmic. The chain crosses the membrane as a helical span at residues 8 to 32 (GFLGLLVSALLVGFLSVIFVLIWVL). The 206-residue stretch at 15–220 (SALLVGFLSV…FGALIFWIVT (206 aa)) folds into the Cytochrome b561 domain. The Extracellular portion of the chain corresponds to 33–47 (HFREGLGWNGSGLEF). A helical membrane pass occupies residues 48–69 (NWHPVLAVTGFVFIQGIAIIVY). Residues histidine 50, arginine 70, and lysine 79 each contribute to the heme b site. Over 70-78 (RLPWTWKCS) the chain is Cytoplasmic. Residues lysine 79 and lysine 83 each coordinate L-ascorbate. A helical transmembrane segment spans residues 79-105 (KLLMKSIHAGLNAVAAILAIISVVAVF). Histidine 86 contributes to the heme b binding site. The Extracellular segment spans residues 106 to 118 (EYHNVQKVPHMYS). Position 108 (histidine 108) interacts with Fe(3+). Heme b contacts are provided by residues 115 to 118 (HMYS) and histidine 120. A helical transmembrane segment spans residues 119 to 144 (LHSWVGLTALILYIQQLVVGFFVFLL). The Cytoplasmic portion of the chain corresponds to 145–151 (PWAPPSL). An L-ascorbate-binding site is contributed by arginine 152. The chain crosses the membrane as a helical span at residues 152–179 (RAIVMPIHVYSGLLLFGTVIATVLMGVT). Heme b is bound by residues histidine 159 and glutamate 180. Residues 180–197 (EKLFFVLKHPSYHSFPPE) lie on the Extracellular side of the membrane. The helical transmembrane segment at 198 to 222 (GVFTNTLGLLILVFGALIFWIVTRP) threads the bilayer. The Cytoplasmic portion of the chain corresponds to 223 to 290 (QWKRPREPGS…LADSGQRSTM (68 aa)). Lysine 225 contacts heme b. Phosphoserine is present on serine 232. The interval 257–290 (SMDAADPADAESSSEGAARKRTLGLADSGQRSTM) is disordered. Low complexity predominate over residues 260–272 (AADPADAESSSEG). Threonine 289 carries the post-translational modification Phosphothreonine.

In terms of assembly, homodimer. Heme b is required as a cofactor. As to expression, highly expressed in the brush-border membrane of duodenal enterocytes (at protein level). Also expressed in liver and spleen.

It is found in the cell membrane. Its subcellular location is the apical cell membrane. It carries out the reaction Fe(3+)(out) + L-ascorbate(in) = monodehydro-L-ascorbate radical(in) + Fe(2+)(out) + H(+). The catalysed reaction is Cu(2+)(out) + L-ascorbate(in) = Cu(+)(out) + monodehydro-L-ascorbate radical(in) + H(+). It catalyses the reaction monodehydro-L-ascorbate radical(out) + L-ascorbate(in) = monodehydro-L-ascorbate radical(in) + L-ascorbate(out). In terms of biological role, plasma membrane reductase that uses cytoplasmic ascorbate as an electron donor to reduce extracellular Fe(3+) into Fe(2+). Probably functions in dietary iron absorption at the brush border of duodenal enterocytes by producing Fe(2+), the divalent form of iron that can be transported into enterocytes. It is also able to reduce extracellular monodehydro-L-ascorbate and may be involved in extracellular ascorbate regeneration by erythrocytes in blood. May also act as a ferrireductase in airway epithelial cells. May also function as a cupric transmembrane reductase. This is Plasma membrane ascorbate-dependent reductase CYBRD1 from Mus musculus (Mouse).